The primary structure comprises 435 residues: 3-phosphoshikimate 1-carboxyvinyltransferase (435 aa).

3-phosphoshikimate-binding residues include K23, S24, and R28. K23 contacts phosphoenolpyruvate. Phosphoenolpyruvate is bound by residues G97 and R125. Residues S170, S171, Q172, S198, D315, N338, and K342 each contribute to the 3-phosphoshikimate site. Q172 lines the phosphoenolpyruvate pocket. D315 serves as the catalytic Proton acceptor. Phosphoenolpyruvate contacts are provided by R346, R388, and K413.

Belongs to the EPSP synthase family. In terms of assembly, monomer.

It is found in the cytoplasm. The enzyme catalyses 3-phosphoshikimate + phosphoenolpyruvate = 5-O-(1-carboxyvinyl)-3-phosphoshikimate + phosphate. It participates in metabolic intermediate biosynthesis; chorismate biosynthesis; chorismate from D-erythrose 4-phosphate and phosphoenolpyruvate: step 6/7. Catalyzes the transfer of the enolpyruvyl moiety of phosphoenolpyruvate (PEP) to the 5-hydroxyl of shikimate-3-phosphate (S3P) to produce enolpyruvyl shikimate-3-phosphate and inorganic phosphate. In Buchnera aphidicola subsp. Cinara cedri (strain Cc), this protein is 3-phosphoshikimate 1-carboxyvinyltransferase.